A 418-amino-acid polypeptide reads, in one-letter code: Gamma-glutamyl phosphate reductase (418 aa).

The protein belongs to the gamma-glutamyl phosphate reductase family.

It is found in the cytoplasm. It carries out the reaction L-glutamate 5-semialdehyde + phosphate + NADP(+) = L-glutamyl 5-phosphate + NADPH + H(+). The protein operates within amino-acid biosynthesis; L-proline biosynthesis; L-glutamate 5-semialdehyde from L-glutamate: step 2/2. In terms of biological role, catalyzes the NADPH-dependent reduction of L-glutamate 5-phosphate into L-glutamate 5-semialdehyde and phosphate. The product spontaneously undergoes cyclization to form 1-pyrroline-5-carboxylate. This Geotalea daltonii (strain DSM 22248 / JCM 15807 / FRC-32) (Geobacter daltonii) protein is Gamma-glutamyl phosphate reductase.